A 239-amino-acid chain; its full sequence is Purine nucleoside phosphorylase DeoD-type (239 aa).

His-5 contacts a purine D-ribonucleoside. Phosphate-binding positions include Gly-21, Arg-25, Arg-44, and 88–91; that span reads RVGS. Residues 180–182 and 204–205 contribute to the a purine D-ribonucleoside site; these read EME and SD. The active-site Proton donor is Asp-205.

The protein belongs to the PNP/UDP phosphorylase family. In terms of assembly, homohexamer; trimer of homodimers.

It catalyses the reaction a purine D-ribonucleoside + phosphate = a purine nucleobase + alpha-D-ribose 1-phosphate. The enzyme catalyses a purine 2'-deoxy-D-ribonucleoside + phosphate = a purine nucleobase + 2-deoxy-alpha-D-ribose 1-phosphate. Catalyzes the reversible phosphorolytic breakdown of the N-glycosidic bond in the beta-(deoxy)ribonucleoside molecules, with the formation of the corresponding free purine bases and pentose-1-phosphate. The chain is Purine nucleoside phosphorylase DeoD-type from Cronobacter sakazakii (strain ATCC BAA-894) (Enterobacter sakazakii).